An 89-amino-acid chain; its full sequence is Phosphocarrier protein HPr (89 aa).

The HPr domain occupies 1 to 88 (MLQRDTTIIN…ALIANRFGEG (88 aa)). His15 (pros-phosphohistidine intermediate) is an active-site residue.

This sequence belongs to the HPr family.

It is found in the cytoplasm. In terms of biological role, general (non sugar-specific) component of the phosphoenolpyruvate-dependent sugar phosphotransferase system (sugar PTS). This major carbohydrate active-transport system catalyzes the phosphorylation of incoming sugar substrates concomitantly with their translocation across the cell membrane. The phosphoryl group from phosphoenolpyruvate (PEP) is transferred to the phosphoryl carrier protein HPr by enzyme I. Phospho-HPr then transfers it to the PTS EIIA domain. The protein is Phosphocarrier protein HPr (phbH) of Cupriavidus necator (strain ATCC 17699 / DSM 428 / KCTC 22496 / NCIMB 10442 / H16 / Stanier 337) (Ralstonia eutropha).